Consider the following 193-residue polypeptide: Cbp/p300-interacting transactivator 1 (193 aa).

Disordered stretches follow at residues 1–26 (MPTTSRPALDVKGGTSPAKEDANQEM), 50–88 (VASNGTKASGAPTSSSGSPIGSPTTTPPTKPPSFNLHPA), and 106–147 (GMAA…SPAI). A compositionally biased stretch (low complexity) spans 54–73 (GTKASGAPTSSSGSPIGSPT). The Nuclear export signal signature appears at 158–167 (LMSLVVELGL).

The protein belongs to the CITED family. As to quaternary structure, interacts (via C-terminus) with CREBBP. Interacts with EGR2. Homodimer. Binds to RBM14. Interacts (via N-terminus) with HSPA8; the interaction suppresses the association of CITED1 with p300/CBP and SMAD-mediated transcription transactivation. Interacts (via C-terminus) with TOX3 (via HGM box); the interaction increases estrogen-response element (ERE)-dependent transcription and protection against cell death. Interacts with ESR1; the interaction occurs in a estrogen-dependent manner. Interacts (unphosphorylated form preferentially and via C-terminus) with EP300. Post-translationally, phosphorylated. Phosphorylation changes in a cell cycle-dependent manner and reduces its transcriptional coactivator activity. In terms of tissue distribution, expressed only in melanocytes and testis.

It localises to the nucleus. The protein resides in the cytoplasm. Functionally, transcriptional coactivator of the p300/CBP-mediated transcription complex. Enhances SMAD-mediated transcription by strengthening the functional link between the DNA-binding SMAD transcription factors and the p300/CBP transcription coactivator complex. Stimulates estrogen-dependent transactivation activity mediated by estrogen receptors signaling; stabilizes the interaction of estrogen receptor ESR1 and histone acetyltransferase EP300. Positively regulates TGF-beta signaling through its association with the SMAD/p300/CBP-mediated transcriptional coactivator complex. Induces transcription from estrogen-responsive promoters and protection against cell death. Potentiates EGR2-mediated transcriptional activation activity from the ERBB2 promoter. Acts as an inhibitor of osteoblastic mineralization through a cAMP-dependent parathyroid hormone receptor signaling. May play a role in pigmentation of melanocytes. Associates with chromatin to the estrogen-responsive TGF-alpha promoter region in a estrogen-dependent manner. In Homo sapiens (Human), this protein is Cbp/p300-interacting transactivator 1 (CITED1).